Consider the following 55-residue polypeptide: MPQLNPNPWFFIMIMSWAVFLLLIQPKLLSFTHTNLPSNKPLSTPNPTPWTWPWT.

Residues 9–29 (WFFIMIMSWAVFLLLIQPKLL) form a helical membrane-spanning segment.

It belongs to the ATPase protein 8 family. As to quaternary structure, component of the ATP synthase complex composed at least of ATP5F1A/subunit alpha, ATP5F1B/subunit beta, ATP5MC1/subunit c (homooctomer), MT-ATP6/subunit a, MT-ATP8/subunit 8, ATP5ME/subunit e, ATP5MF/subunit f, ATP5MG/subunit g, ATP5MK/subunit k, ATP5MJ/subunit j, ATP5F1C/subunit gamma, ATP5F1D/subunit delta, ATP5F1E/subunit epsilon, ATP5PF/subunit F6, ATP5PB/subunit b, ATP5PD/subunit d, ATP5PO/subunit OSCP. ATP synthase complex consists of a soluble F(1) head domain (subunits alpha(3) and beta(3)) - the catalytic core - and a membrane F(0) domain - the membrane proton channel (subunits c, a, 8, e, f, g, k and j). These two domains are linked by a central stalk (subunits gamma, delta, and epsilon) rotating inside the F1 region and a stationary peripheral stalk (subunits F6, b, d, and OSCP).

Its subcellular location is the mitochondrion membrane. In terms of biological role, subunit 8, of the mitochondrial membrane ATP synthase complex (F(1)F(0) ATP synthase or Complex V) that produces ATP from ADP in the presence of a proton gradient across the membrane which is generated by electron transport complexes of the respiratory chain. ATP synthase complex consist of a soluble F(1) head domain - the catalytic core - and a membrane F(1) domain - the membrane proton channel. These two domains are linked by a central stalk rotating inside the F(1) region and a stationary peripheral stalk. During catalysis, ATP synthesis in the catalytic domain of F(1) is coupled via a rotary mechanism of the central stalk subunits to proton translocation. In vivo, can only synthesize ATP although its ATP hydrolase activity can be activated artificially in vitro. Part of the complex F(0) domain. In Rhea americana (Greater rhea), this protein is ATP synthase F(0) complex subunit 8.